Reading from the N-terminus, the 289-residue chain is 4-hydroxybenzoate octaprenyltransferase (289 aa).

9 helical membrane passes run 19-39 (IPIL…SHGL), 42-62 (ISYL…GCII), 85-105 (GQLS…VAFI), 107-127 (VLFL…LAIL), 134-154 (FFAI…FMAF), 165-185 (AWIF…IYAL), 211-231 (ILLF…YCDF), 233-253 (SFFY…YFLY), and 265-285 (FSAN…QYII).

Belongs to the UbiA prenyltransferase family. Mg(2+) is required as a cofactor.

The protein resides in the cell inner membrane. The enzyme catalyses all-trans-octaprenyl diphosphate + 4-hydroxybenzoate = 4-hydroxy-3-(all-trans-octaprenyl)benzoate + diphosphate. It participates in cofactor biosynthesis; ubiquinone biosynthesis. In terms of biological role, catalyzes the prenylation of para-hydroxybenzoate (PHB) with an all-trans polyprenyl group. Mediates the second step in the final reaction sequence of ubiquinone-8 (UQ-8) biosynthesis, which is the condensation of the polyisoprenoid side chain with PHB, generating the first membrane-bound Q intermediate 3-octaprenyl-4-hydroxybenzoate. The sequence is that of 4-hydroxybenzoate octaprenyltransferase from Francisella tularensis subsp. holarctica (strain FTNF002-00 / FTA).